Reading from the N-terminus, the 184-residue chain is Photosystem I assembly protein Ycf4 (184 aa).

2 helical membrane passes run 24-44 (WAFI…SSYI) and 57-77 (IIFF…LFIS).

It belongs to the Ycf4 family.

It localises to the plastid. It is found in the chloroplast thylakoid membrane. Functionally, seems to be required for the assembly of the photosystem I complex. This is Photosystem I assembly protein Ycf4 from Buxus microphylla (Littleleaf boxwood).